A 433-amino-acid chain; its full sequence is 3-phosphoshikimate 1-carboxyvinyltransferase (433 aa).

Residues K23, S24, and R28 each coordinate 3-phosphoshikimate. K23 provides a ligand contact to phosphoenolpyruvate. Phosphoenolpyruvate is bound by residues G95 and R123. Residues S167, Q169, D317, and K344 each coordinate 3-phosphoshikimate. Residue Q169 coordinates phosphoenolpyruvate. The active-site Proton acceptor is D317. Phosphoenolpyruvate-binding residues include R348 and R390.

Belongs to the EPSP synthase family. In terms of assembly, monomer.

It is found in the cytoplasm. The catalysed reaction is 3-phosphoshikimate + phosphoenolpyruvate = 5-O-(1-carboxyvinyl)-3-phosphoshikimate + phosphate. Its pathway is metabolic intermediate biosynthesis; chorismate biosynthesis; chorismate from D-erythrose 4-phosphate and phosphoenolpyruvate: step 6/7. Its function is as follows. Catalyzes the transfer of the enolpyruvyl moiety of phosphoenolpyruvate (PEP) to the 5-hydroxyl of shikimate-3-phosphate (S3P) to produce enolpyruvyl shikimate-3-phosphate and inorganic phosphate. This is 3-phosphoshikimate 1-carboxyvinyltransferase from Staphylococcus epidermidis (strain ATCC 35984 / DSM 28319 / BCRC 17069 / CCUG 31568 / BM 3577 / RP62A).